The primary structure comprises 380 residues: Tryptophan 2,3-dioxygenase (380 aa).

Substrate contacts are provided by residues 57–61 (FIITH) and Arg128. A heme-binding site is contributed by His313. Thr328 lines the substrate pocket.

Belongs to the tryptophan 2,3-dioxygenase family. As to quaternary structure, homotetramer. Dimer of dimers. It depends on heme as a cofactor.

It carries out the reaction L-tryptophan + O2 = N-formyl-L-kynurenine. Its pathway is amino-acid degradation; L-tryptophan degradation via kynurenine pathway; L-kynurenine from L-tryptophan: step 1/2. It functions in the pathway pigment biosynthesis; ommochrome biosynthesis. Heme-dependent dioxygenase that catalyzes the oxidative cleavage of the L-tryptophan (L-Trp) pyrrole ring and converts L-tryptophan to N-formyl-L-kynurenine. Catalyzes the oxidative cleavage of the indole moiety. In Drosophila ananassae (Fruit fly), this protein is Tryptophan 2,3-dioxygenase.